A 214-amino-acid polypeptide reads, in one-letter code: Large ribosomal subunit protein uL4 (214 aa).

Residues 43–83 are disordered; that stretch reads RRQAGTHKAKSRSEVNRTTKKSIKQKGSGGARHGSRNAPIF.

Belongs to the universal ribosomal protein uL4 family. In terms of assembly, part of the 50S ribosomal subunit.

Its function is as follows. One of the primary rRNA binding proteins, this protein initially binds near the 5'-end of the 23S rRNA. It is important during the early stages of 50S assembly. It makes multiple contacts with different domains of the 23S rRNA in the assembled 50S subunit and ribosome. In terms of biological role, forms part of the polypeptide exit tunnel. The polypeptide is Large ribosomal subunit protein uL4 (Hyphomonas neptunium (strain ATCC 15444)).